The chain runs to 92 residues: Cell division topological specificity factor (92 aa).

It belongs to the MinE family.

Prevents the cell division inhibition by proteins MinC and MinD at internal division sites while permitting inhibition at polar sites. This ensures cell division at the proper site by restricting the formation of a division septum at the midpoint of the long axis of the cell. This Desulforamulus reducens (strain ATCC BAA-1160 / DSM 100696 / MI-1) (Desulfotomaculum reducens) protein is Cell division topological specificity factor.